We begin with the raw amino-acid sequence, 426 residues long: MQIERIKGFRDFYPEDMEIEKFIFETASSVAESYGFKRIDFPSLEYIDLYRIKSGEELLNQTYSFTDRGGREVTLIPEATPSTVRMLTSRKDIAKPVRWYSFPKVWRYEEPQAGRFREHYQFNADIFGPSNEEADAEIISLASGILDGLGLSGAYEIRVNSRIMMEDILNGMGIADPYTVFSIVDRFHKVSKETFVDDLMSVGLSEENSNTIYRMCSEASEPGGISGLFGSGKVSKAAERLIRTIDILKEYGVKSVKYDFSIVRGLSYYTGLVFEAYDKSGQFRAILGGGRYDNLAKLFSEQDIPAVGFGMGDAVISLLLKSKGVKAPHAKKSVYVCRVGTVKAERIASISKMLRSSGFIVSAEIMDRSLSSQLKYASYEGCEYAVIAGERDLENNSVTVRDLSTGEQEIVTLGDLVPFLEKSTSY.

Belongs to the class-II aminoacyl-tRNA synthetase family.

It localises to the cytoplasm. It catalyses the reaction tRNA(His) + L-histidine + ATP = L-histidyl-tRNA(His) + AMP + diphosphate + H(+). In Thermoplasma volcanium (strain ATCC 51530 / DSM 4299 / JCM 9571 / NBRC 15438 / GSS1), this protein is Histidine--tRNA ligase (hisS).